The following is a 506-amino-acid chain: 26S proteasome non-ATPase regulatory subunit 5 (506 aa).

It belongs to the proteasome subunit S5B/HSM3 family. Interacts with PI31; this interaction is increased by PI31 ADP-ribosylation. Interacts with Rpt2.

Its function is as follows. Acts as a chaperone during the assembly of the 26S proteasome. The chain is 26S proteasome non-ATPase regulatory subunit 5 from Drosophila melanogaster (Fruit fly).